Here is a 155-residue protein sequence, read N- to C-terminus: 6,7-dimethyl-8-ribityllumazine synthase (155 aa).

Residues Trp-18, 52-54, and 76-78 contribute to the 5-amino-6-(D-ribitylamino)uracil site; these read AFE and LVV. Catalysis depends on Arg-84, which acts as the Proton donor. 5-amino-6-(D-ribitylamino)uracil is bound at residue Ser-109. His-123 contacts (2S)-2-hydroxy-3-oxobutyl phosphate.

Belongs to the DMRL synthase family.

The catalysed reaction is (2S)-2-hydroxy-3-oxobutyl phosphate + 5-amino-6-(D-ribitylamino)uracil = 6,7-dimethyl-8-(1-D-ribityl)lumazine + phosphate + 2 H2O + H(+). It participates in cofactor biosynthesis; riboflavin biosynthesis; riboflavin from 2-hydroxy-3-oxobutyl phosphate and 5-amino-6-(D-ribitylamino)uracil: step 1/2. Functionally, catalyzes the formation of 6,7-dimethyl-8-ribityllumazine by condensation of 5-amino-6-(D-ribitylamino)uracil with 3,4-dihydroxy-2-butanone 4-phosphate. This is the penultimate step in the biosynthesis of riboflavin. The sequence is that of 6,7-dimethyl-8-ribityllumazine synthase from Rhodococcus erythropolis (Arthrobacter picolinophilus).